The primary structure comprises 59 residues: Large ribosomal subunit protein bL32 (59 aa).

The segment at 1–59 (MAVQQNKKSPSKRGMHRSHDFLTTSPLAVEPSTGEVHLRHHISPNGYYRGKKVVKTKND) is disordered. The segment covering 49-59 (RGKKVVKTKND) has biased composition (basic residues).

This sequence belongs to the bacterial ribosomal protein bL32 family.

The chain is Large ribosomal subunit protein bL32 from Burkholderia mallei (strain NCTC 10247).